We begin with the raw amino-acid sequence, 238 residues long: 2-C-methyl-D-erythritol 4-phosphate cytidylyltransferase (238 aa).

Belongs to the IspD/TarI cytidylyltransferase family. IspD subfamily.

The enzyme catalyses 2-C-methyl-D-erythritol 4-phosphate + CTP + H(+) = 4-CDP-2-C-methyl-D-erythritol + diphosphate. Its pathway is isoprenoid biosynthesis; isopentenyl diphosphate biosynthesis via DXP pathway; isopentenyl diphosphate from 1-deoxy-D-xylulose 5-phosphate: step 2/6. Catalyzes the formation of 4-diphosphocytidyl-2-C-methyl-D-erythritol from CTP and 2-C-methyl-D-erythritol 4-phosphate (MEP). The protein is 2-C-methyl-D-erythritol 4-phosphate cytidylyltransferase of Acinetobacter baumannii (strain ACICU).